The following is a 203-amino-acid chain: dITP/XTP pyrophosphatase (203 aa).

7–12 (TGNRDK) provides a ligand contact to substrate. Residue Asp-73 is the Proton acceptor of the active site. Asp-73 is a binding site for Mg(2+). Residues Ser-74, 155–158 (FGYD), Lys-178, and 183–184 (HR) each bind substrate.

The protein belongs to the HAM1 NTPase family. Homodimer. Requires Mg(2+) as cofactor.

It catalyses the reaction XTP + H2O = XMP + diphosphate + H(+). The enzyme catalyses dITP + H2O = dIMP + diphosphate + H(+). It carries out the reaction ITP + H2O = IMP + diphosphate + H(+). Its function is as follows. Pyrophosphatase that catalyzes the hydrolysis of nucleoside triphosphates to their monophosphate derivatives, with a high preference for the non-canonical purine nucleotides XTP (xanthosine triphosphate), dITP (deoxyinosine triphosphate) and ITP. Seems to function as a house-cleaning enzyme that removes non-canonical purine nucleotides from the nucleotide pool, thus preventing their incorporation into DNA/RNA and avoiding chromosomal lesions. The sequence is that of dITP/XTP pyrophosphatase from Wolinella succinogenes (strain ATCC 29543 / DSM 1740 / CCUG 13145 / JCM 31913 / LMG 7466 / NCTC 11488 / FDC 602W) (Vibrio succinogenes).